The sequence spans 172 residues: Adrenodoxin-like protein 1, mitochondrial (172 aa).

The region spanning 57–159 (VNITYVDKDG…GMELELPKAT (103 aa)) is the 2Fe-2S ferredoxin-type domain. Residues C94, C100, C103, and C140 each contribute to the [2Fe-2S] cluster site.

Belongs to the adrenodoxin/putidaredoxin family. The cofactor is [2Fe-2S] cluster.

It localises to the mitochondrion matrix. Its function is as follows. Required for ecdysteroidogenesis in the prothoracic gland which is necessary for larval to pupal transition. This is Adrenodoxin-like protein 1, mitochondrial from Drosophila melanogaster (Fruit fly).